Consider the following 307-residue polypeptide: MTGMESGENLENMEDILARHRKENKDLQNKITGMKKQATKSKRKEVNSKCLDLQDKLKTKQENEIRDWKIANNEVFDAEQEDEVTPEKLLEQLSISRDEKEQQNVPVQQQQQGQTKKRRNRQKERLAKRDAAIAKMKEEAALEASKQPDLKKMEQESIDQLCELKKLKQFDIQPDGHCLFASILDQLKLRHDPKKLDQDMDVMKLRWLSCNYVQEHRDDFIPYLFDEETMKMKDIDEYTKEMEHTAQWGGEIEILALSHVFDCPISILMSGRPIQVYNECGKNPELKLVYYKHSYALGEHYNSLHDS.

Disordered stretches follow at residues 23 to 46 and 96 to 130; these read ENKD…RKEV and SRDE…AKRD. Low complexity predominate over residues 103 to 114; sequence QNVPVQQQQQGQ. The OTU domain maps to 167 to 307; it reads LKQFDIQPDG…GEHYNSLHDS (141 aa).

This chain is OTU domain-containing protein 2 (OTU2), found in Saccharomyces cerevisiae (strain ATCC 204508 / S288c) (Baker's yeast).